Consider the following 313-residue polypeptide: MEIQFLGTGAGVPAKHRNVTGIALKLLDERNAVWLFDCGEGTQLQILKSSIRPRKIEKIFITHLHGDHIFGLPGLLSSRSFQGGTEPLEIYGPVGIADFVKTSLRVSQSRLSYPLKFIELTKENDVIFKDKQFTVRCNILDHGITSFGYRIEEAAHEGELQVEKLQALGIPSGPLYGKLKRGETIVFDGQEINGQAFVGERKPGRIVTILGDTRKTKNSVTLARRADVLVHESTFNKHEAKMAKAYFHSTSQQAAEVAKEAQVKQLILTHISARYLTKEAYQLQEEAQEIFPNTKIVKDMDIIEIPFANEGGA.

Histidine 63, histidine 65, aspartate 67, histidine 68, histidine 142, aspartate 212, and histidine 270 together coordinate Zn(2+). The active-site Proton acceptor is the aspartate 67.

It belongs to the RNase Z family. Homodimer. It depends on Zn(2+) as a cofactor.

The enzyme catalyses Endonucleolytic cleavage of RNA, removing extra 3' nucleotides from tRNA precursor, generating 3' termini of tRNAs. A 3'-hydroxy group is left at the tRNA terminus and a 5'-phosphoryl group is left at the trailer molecule.. In terms of biological role, zinc phosphodiesterase, which displays some tRNA 3'-processing endonuclease activity. Probably involved in tRNA maturation, by removing a 3'-trailer from precursor tRNA. The sequence is that of Ribonuclease Z from Enterococcus faecalis (strain ATCC 700802 / V583).